The sequence spans 259 residues: Thrombin-like enzyme gyroxin B1.7 (259 aa).

The first 18 residues, 1 to 18, serve as a signal peptide directing secretion; that stretch reads MVLIRVLANLLILQLSYA. The propeptide occupies 19–259; it reads QKSSELVIGG…AGNTAVTCPP (241 aa). Residues 25-250 enclose the Peptidase S1 domain; the sequence is VIGGDECNIN…DTEWIQSIIA (226 aa). 5 cysteine pairs are disulfide-bonded: cysteine 31–cysteine 162, cysteine 49–cysteine 65, cysteine 141–cysteine 211, cysteine 173–cysteine 190, and cysteine 201–cysteine 226. Catalysis depends on histidine 64, which acts as the Charge relay system. Asparagine 102 carries N-linked (GlcNAc...) asparagine glycosylation. The active-site Charge relay system is aspartate 109. The active-site Charge relay system is the serine 205.

Belongs to the peptidase S1 family. Snake venom subfamily. Monomer. As to expression, expressed by the venom gland.

The protein resides in the secreted. Thrombin-like snake venom serine protease. Displays a specificity similar to trypsin. Releases only fibrinopeptide A in the conversion of fibrinogen to fibrin. Shows coagulant, esterase and amidase activities. Reversibly increases the permeability of the blood brain barrier (BBB) in mice. Induces the barrel rotation syndrome in mice, which is manifested by gyroxin-like, rapid rolling motions. This syndrome may be due to its effect on BBB permeability, and certainly also to other actions affecting endogenous substrates present in the endothelium, nervous tissues or blood. This is Thrombin-like enzyme gyroxin B1.7 from Crotalus durissus terrificus (South American rattlesnake).